Consider the following 134-residue polypeptide: Small ribosomal subunit protein uS9c (134 aa).

The protein belongs to the universal ribosomal protein uS9 family.

Its subcellular location is the plastid. The protein resides in the chloroplast. The polypeptide is Small ribosomal subunit protein uS9c (rps9) (Euglena gracilis).